We begin with the raw amino-acid sequence, 48 residues long: ATP synthase protein 8 (48 aa).

Met1 carries the N-formylmethionine modification. The Mitochondrial intermembrane portion of the chain corresponds to 1 to 12 (MPQLIPFFFLNQ). The helical transmembrane segment at 13–33 (LFYGYLALFALLVLVSWVILP) threads the bilayer. At 34–48 (YLLQLQIVRLLITKL) the chain is on the mitochondrial matrix side.

F-type ATP synthases have 2 components, the catalytic core F(1) and the membrane-embedded component F(0), linked together by a central stalk and a peripheral stalk. The central stalk, also called rotor shaft, is often seen as part of F(1). The peripheral stalk is seen as part of F(0). F(0) contains the membrane channel next to the rotor. F-type ATP synthases form dimers but each monomer functions independently in ATP generation. The dimer consists of 18 different polypeptides: ATP1 (subunit alpha, part of F(1), 3 molecules per monomer), ATP2 (subunit beta, part of F(1), 3 molecules per monomer), ATP3 (subunit gamma, part of the central stalk), ATP4 (subunit b, part of the peripheral stalk), ATP5/OSCP (subunit 5/OSCP, part of the peripheral stalk), ATP6 (subunit a, part of the peripheral stalk), ATP7 (subunit d, part of the peripheral stalk), ATP8 (subunit 8, part of the peripheral stalk), OLI1 (subunit c, part of the rotor, 10 molecules per monomer), ATP14 (subunit h, part of the peripheral stalk), ATP15 (subunit epsilon, part of the central stalk), ATP16 (subunit delta, part of the central stalk), ATP17 (subunit f, part of the peripheral stalk), ATP18 (subunit i/j, part of the peripheral stalk). Dimer-specific subunits are ATP19 (subunit k, at interface between monomers), ATP20 (subunit g, at interface between monomers), TIM11 (subunit e, at interface between monomers). Also contains subunit L.

It is found in the mitochondrion inner membrane. Its function is as follows. Mitochondrial membrane ATP synthase (F(1)F(0) ATP synthase or Complex V) produces ATP from ADP in the presence of a proton gradient across the membrane which is generated by electron transport complexes of the respiratory chain. F-type ATP synthases consist of two structural domains, F(1) - containing the extramembraneous catalytic core, and F(0) - containing the membrane proton channel, linked together by a central stalk and a peripheral stalk. During catalysis, ATP synthesis in the catalytic domain of F(1) is coupled via a rotary mechanism of the central stalk subunits to proton translocation. Part of the complex F(0) domain. Minor subunit located with subunit a/ATP6 in the membrane. In Pichia angusta (Yeast), this protein is ATP synthase protein 8.